The primary structure comprises 452 residues: Mitochondrial import inner membrane translocase subunit TIM44 (452 aa).

Position 128 is a phosphothreonine (Thr128). 166 to 173 (SGEKLGKT) is a binding site for ATP. Lys177 carries the post-translational modification N6-succinyllysine. Ser180 carries the phosphoserine modification. Lys217 carries the post-translational modification N6-succinyllysine.

Belongs to the Tim44 family. Probable component of the PAM complex at least composed of a mitochondrial HSP70 protein, GRPEL1 or GRPEL2, TIMM44, TIMM16/PAM16 and TIMM14/DNAJC19. The complex interacts with the TIMM23 component of the TIM23 complex. Interacts with SLC25A4/ANT1 and SLC25A5/ANT2; leading to inhibit the presequence translocase TIMM23, thereby promoting stabilization of PINK1.

The protein resides in the mitochondrion inner membrane. Its function is as follows. Essential component of the PAM complex, a complex required for the translocation of transit peptide-containing proteins from the inner membrane into the mitochondrial matrix in an ATP-dependent manner. Recruits mitochondrial HSP70 to drive protein translocation into the matrix using ATP as an energy source. The protein is Mitochondrial import inner membrane translocase subunit TIM44 (Timm44) of Mus musculus (Mouse).